The chain runs to 612 residues: BTB/POZ domain-containing protein 9 (612 aa).

The BTB domain maps to 36 to 104 (GDVTFVVEKK…IYTGRATLTD (69 aa)). Residues 142–240 (VCMTFDVASL…SLTELLNVVR (99 aa)) enclose the BACK domain. A disordered region spans residues 560 to 612 (QSSQKEENSEESGTGDTSLAGQQLDSHALRAPSGSSLPSSPGSNSRSPNRQHQ). Positions 573-584 (TGDTSLAGQQLD) are enriched in polar residues. Positions 588-612 (LRAPSGSSLPSSPGSNSRSPNRQHQ) are enriched in low complexity.

Detected in the brain (at protein level). Moderately expressed in all specific brain regions examined. Expressed in the dopaminergic neurons of the substantia nigra and A11 neurons. Highly expressed in kidney and moderately expressed in all other adult and fetal tissues.

The chain is BTB/POZ domain-containing protein 9 (BTBD9) from Homo sapiens (Human).